A 361-amino-acid chain; its full sequence is Endo-1,4-beta-xylanase 2 (361 aa).

The first 26 residues, 1 to 26 (MHFSTITAALALLGLGAATPTDYSTS), serve as a signal peptide directing secretion. The 309-residue stretch at 46–354 (IGTALTIRDD…KPAYSSVLKT (309 aa)) folds into the GH10 domain. Asn-88 and Asn-130 each carry an N-linked (GlcNAc...) asparagine glycan. Glu-160 acts as the Proton donor in catalysis. Residue Glu-276 is the Nucleophile of the active site. An intrachain disulfide couples Cys-304 to Cys-310.

This sequence belongs to the glycosyl hydrolase 10 (cellulase F) family.

The protein localises to the secreted. The enzyme catalyses Endohydrolysis of (1-&gt;4)-beta-D-xylosidic linkages in xylans.. It functions in the pathway glycan degradation; xylan degradation. Functionally, endo-1,4-beta-xylanase involved in the hydrolysis of xylan, a major structural heterogeneous polysaccharide found in plant biomass representing the second most abundant polysaccharide in the biosphere, after cellulose. Hydrolyzes birch-wood xylan, with a similar activity toward oat-spelt xylan. Also shows weak activities toward pNP-beta-D-cellobioside and pNP-beta-D-xylopyranoside, but no detectable activity toward carboxymethyl cellulose and pNP-beta-L-arabinofuranoside.-. This Aureobasidium pullulans (Black yeast) protein is Endo-1,4-beta-xylanase 2 (xynII).